The following is a 261-amino-acid chain: uncharacterized protein (261 aa).

This is an uncharacterized protein from Haemophilus influenzae (strain ATCC 51907 / DSM 11121 / KW20 / Rd).